The primary structure comprises 210 residues: Imidazole glycerol phosphate synthase subunit HisH (210 aa).

The Glutamine amidotransferase type-1 domain occupies 1–210 (MIAILDYGMG…KLLENFIRFI (210 aa)). The active-site Nucleophile is cysteine 79. Catalysis depends on residues histidine 191 and glutamate 193.

In terms of assembly, heterodimer of HisH and HisF.

It localises to the cytoplasm. It catalyses the reaction 5-[(5-phospho-1-deoxy-D-ribulos-1-ylimino)methylamino]-1-(5-phospho-beta-D-ribosyl)imidazole-4-carboxamide + L-glutamine = D-erythro-1-(imidazol-4-yl)glycerol 3-phosphate + 5-amino-1-(5-phospho-beta-D-ribosyl)imidazole-4-carboxamide + L-glutamate + H(+). The enzyme catalyses L-glutamine + H2O = L-glutamate + NH4(+). Its pathway is amino-acid biosynthesis; L-histidine biosynthesis; L-histidine from 5-phospho-alpha-D-ribose 1-diphosphate: step 5/9. Its function is as follows. IGPS catalyzes the conversion of PRFAR and glutamine to IGP, AICAR and glutamate. The HisH subunit catalyzes the hydrolysis of glutamine to glutamate and ammonia as part of the synthesis of IGP and AICAR. The resulting ammonia molecule is channeled to the active site of HisF. The chain is Imidazole glycerol phosphate synthase subunit HisH from Leptospira interrogans serogroup Icterohaemorrhagiae serovar copenhageni (strain Fiocruz L1-130).